The sequence spans 411 residues: Serpin A12 (411 aa).

Residues Met1–Leu20 form the signal peptide. Asn92 and Asn267 each carry an N-linked (GlcNAc...) asparagine glycan. The reactive center loop stretch occupies residues Gly364–Arg382.

This sequence belongs to the serpin family. In terms of assembly, forms a stable complex with KLK7. Glycosylation slightly decreases affinity for heparin, but otherwise has no significant effect on KLK7 inhibitory activity or thermal stability of the protein. Expressed in visceral adipose tissues.

Its subcellular location is the secreted. With respect to regulation, inhibition of KLK7 is enhanced by heparin. Its function is as follows. Adipokine that modulates insulin action by specifically inhibiting its target protease KLK7 in white adipose tissues. The polypeptide is Serpin A12 (Serpina12) (Rattus norvegicus (Rat)).